The chain runs to 681 residues: DNA ligase (681 aa).

NAD(+) is bound by residues 45–49, 94–95, and glutamate 120; these read DFDFD and SL. Residue lysine 122 is the N6-AMP-lysine intermediate of the active site. The NAD(+) site is built by arginine 143, glutamate 177, lysine 289, and lysine 313. The Zn(2+) site is built by cysteine 403, cysteine 406, cysteine 421, and cysteine 426. One can recognise a BRCT domain in the interval 593 to 681; sequence SDQQPFAGQS…SLKINFKNTI (89 aa).

It belongs to the NAD-dependent DNA ligase family. LigA subfamily. The cofactor is Mg(2+). Mn(2+) is required as a cofactor.

It catalyses the reaction NAD(+) + (deoxyribonucleotide)n-3'-hydroxyl + 5'-phospho-(deoxyribonucleotide)m = (deoxyribonucleotide)n+m + AMP + beta-nicotinamide D-nucleotide.. In terms of biological role, DNA ligase that catalyzes the formation of phosphodiester linkages between 5'-phosphoryl and 3'-hydroxyl groups in double-stranded DNA using NAD as a coenzyme and as the energy source for the reaction. It is essential for DNA replication and repair of damaged DNA. This chain is DNA ligase, found in Leptospira borgpetersenii serovar Hardjo-bovis (strain JB197).